Reading from the N-terminus, the 171-residue chain is 3-hydroxydecanoyl-[acyl-carrier-protein] dehydratase (171 aa).

Residue His-70 is part of the active site.

It belongs to the thioester dehydratase family. FabA subfamily. As to quaternary structure, homodimer.

It localises to the cytoplasm. It carries out the reaction a (3R)-hydroxyacyl-[ACP] = a (2E)-enoyl-[ACP] + H2O. The enzyme catalyses (3R)-hydroxydecanoyl-[ACP] = (2E)-decenoyl-[ACP] + H2O. The catalysed reaction is (2E)-decenoyl-[ACP] = (3Z)-decenoyl-[ACP]. Its pathway is lipid metabolism; fatty acid biosynthesis. Functionally, necessary for the introduction of cis unsaturation into fatty acids. Catalyzes the dehydration of (3R)-3-hydroxydecanoyl-ACP to E-(2)-decenoyl-ACP and then its isomerization to Z-(3)-decenoyl-ACP. Can catalyze the dehydratase reaction for beta-hydroxyacyl-ACPs with saturated chain lengths up to 16:0, being most active on intermediate chain length. The sequence is that of 3-hydroxydecanoyl-[acyl-carrier-protein] dehydratase from Shewanella baltica (strain OS223).